A 397-amino-acid chain; its full sequence is Histidinol-phosphate aminotransferase (397 aa).

Lys-247 carries the N6-(pyridoxal phosphate)lysine modification.

Belongs to the class-II pyridoxal-phosphate-dependent aminotransferase family. Histidinol-phosphate aminotransferase subfamily. As to quaternary structure, homodimer. Pyridoxal 5'-phosphate is required as a cofactor.

It carries out the reaction L-histidinol phosphate + 2-oxoglutarate = 3-(imidazol-4-yl)-2-oxopropyl phosphate + L-glutamate. Its pathway is amino-acid biosynthesis; L-histidine biosynthesis; L-histidine from 5-phospho-alpha-D-ribose 1-diphosphate: step 7/9. In Frankia casuarinae (strain DSM 45818 / CECT 9043 / HFP020203 / CcI3), this protein is Histidinol-phosphate aminotransferase.